Reading from the N-terminus, the 226-residue chain is Lipoprotein-releasing system ATP-binding protein LolD (226 aa).

The ABC transporter domain maps to 6-226 (LSVEQVSKSF…QLQQGSLIRI (221 aa)). 42–49 (GESGCGKS) is a binding site for ATP.

It belongs to the ABC transporter superfamily. Lipoprotein translocase (TC 3.A.1.125) family. In terms of assembly, the complex is composed of two ATP-binding proteins (LolD) and two transmembrane proteins (LolC and LolE).

The protein localises to the cell inner membrane. Functionally, part of the ABC transporter complex LolCDE involved in the translocation of mature outer membrane-directed lipoproteins, from the inner membrane to the periplasmic chaperone, LolA. Responsible for the formation of the LolA-lipoprotein complex in an ATP-dependent manner. The chain is Lipoprotein-releasing system ATP-binding protein LolD from Treponema pallidum (strain Nichols).